A 757-amino-acid chain; its full sequence is uncharacterized protein (757 aa).

In terms of domain architecture, S1 motif spans 640 to 709 (GMILEGVVSN…ARKRIALTMR (70 aa)). Basic and acidic residues predominate over residues 711-741 (DDEPGGAKHKMPSENRSRERTAGRKPQRNDR). The tract at residues 711-757 (DDEPGGAKHKMPSENRSRERTAGRKPQRNDRAPANSAMADAFAKLKR) is disordered.

This is an uncharacterized protein from Neisseria meningitidis serogroup B (strain ATCC BAA-335 / MC58).